A 120-amino-acid polypeptide reads, in one-letter code: Large ribosomal subunit protein eL34 (120 aa).

It belongs to the eukaryotic ribosomal protein eL34 family.

The chain is Large ribosomal subunit protein eL34 (RPL34) from Pisum sativum (Garden pea).